We begin with the raw amino-acid sequence, 470 residues long: Protein ASPARTIC PROTEASE IN GUARD CELL 2 (470 aa).

The signal sequence occupies residues 1–19; it reads MLLPLFFFFLHLHLHLSSS. The region spanning 131–466 is the Peptidase A1 domain; the sequence is YFVRIGVGSP…DGANGFVGFG (336 aa). The active site involves aspartate 149. Disulfide bonds link cysteine 159–cysteine 162, cysteine 165–cysteine 239, cysteine 186–cysteine 204, cysteine 191–cysteine 199, cysteine 278–cysteine 470, and cysteine 389–cysteine 431. Aspartate 350 is an active-site residue.

Belongs to the peptidase A1 family.

Its function is as follows. Aspartic protease that may be involved in drought avoidance through abscisic acid signaling. The polypeptide is Protein ASPARTIC PROTEASE IN GUARD CELL 2 (ASPG2) (Arabidopsis thaliana (Mouse-ear cress)).